A 312-amino-acid chain; its full sequence is Pyrimidine-specific ribonucleoside hydrolase RihA (312 aa).

Residue His-240 is part of the active site.

The protein belongs to the IUNH family. RihA subfamily.

In terms of biological role, hydrolyzes cytidine or uridine to ribose and cytosine or uracil, respectively. The sequence is that of Pyrimidine-specific ribonucleoside hydrolase RihA from Shewanella woodyi (strain ATCC 51908 / MS32).